A 259-amino-acid chain; its full sequence is tRNA (guanine-N(7)-)-methyltransferase (259 aa).

The interval 1–74 (MGHHGQMHAQ…PAEDPDRPGP (74 aa)) is disordered. The S-adenosyl-L-methionine site is built by Glu91, Glu116, Asn143, and Asp166. Residue Asp166 is part of the active site. Residues Lys170, Asp202, and 238–241 (TKYE) each bind substrate.

Belongs to the class I-like SAM-binding methyltransferase superfamily. TrmB family.

It carries out the reaction guanosine(46) in tRNA + S-adenosyl-L-methionine = N(7)-methylguanosine(46) in tRNA + S-adenosyl-L-homocysteine. It functions in the pathway tRNA modification; N(7)-methylguanine-tRNA biosynthesis. In terms of biological role, catalyzes the formation of N(7)-methylguanine at position 46 (m7G46) in tRNA. The protein is tRNA (guanine-N(7)-)-methyltransferase of Mycobacterium avium (strain 104).